We begin with the raw amino-acid sequence, 647 residues long: Nucleoside triphosphatase I (647 aa).

Residues 48-213 (FIGLSELNSL…KYLINLLRPK (166 aa)) form the Helicase ATP-binding domain. An ATP-binding site is contributed by 61-68 (WDTGYGKT). Positions 150-153 (DEVH) match the DEXH box motif. Residues 377–540 (YIEACKIILN…KINVLNSFMK (164 aa)) form the Helicase C-terminal domain. The segment at 466–532 (DIIILDLPWK…DLIKSKQDKI (67 aa)) is binding to the cap-specific mRNA (nucleoside-2'-O-)-methyltransferase.

It belongs to the helicase family. NPH I subfamily. As to quaternary structure, monomer. Interacts (via C-terminus) with RAP94 (via N-terminus). Interacts with the cap-specific mRNA (nucleoside-2'-O-)-methyltransferase.

It is found in the virion. The enzyme catalyses a ribonucleoside 5'-triphosphate + H2O = a ribonucleoside 5'-diphosphate + phosphate + H(+). DNA-dependent ATPase required for providing the needed energy to achieve the termination of early transcripts. Acts in concert with the RAP94 subunit of the virion RNA polymerase and the capping enzyme/VTF to catalyze release of UUUUUNU-containing nascent RNA from the elongation complex. NPH-I must bind ssDNA in order to exhibit ATPase activity. In Melanoplus sanguinipes entomopoxvirus (MsEPV), this protein is Nucleoside triphosphatase I (NPH1).